The primary structure comprises 422 residues: Glutamate-1-semialdehyde 2,1-aminomutase (422 aa).

At lysine 258 the chain carries N6-(pyridoxal phosphate)lysine.

This sequence belongs to the class-III pyridoxal-phosphate-dependent aminotransferase family. HemL subfamily. Homodimer. The cofactor is pyridoxal 5'-phosphate.

The protein resides in the cytoplasm. It carries out the reaction (S)-4-amino-5-oxopentanoate = 5-aminolevulinate. It functions in the pathway porphyrin-containing compound metabolism; protoporphyrin-IX biosynthesis; 5-aminolevulinate from L-glutamyl-tRNA(Glu): step 2/2. This is Glutamate-1-semialdehyde 2,1-aminomutase from Chlamydia trachomatis serovar D (strain ATCC VR-885 / DSM 19411 / UW-3/Cx).